A 140-amino-acid polypeptide reads, in one-letter code: Probable NADH dehydrogenase [ubiquinone] iron-sulfur protein 6, mitochondrial (140 aa).

It belongs to the complex I NDUFS6 subunit family. In terms of assembly, complex I is composed of 45 different subunits. This is a component of the iron-sulfur (IP) fragment of the enzyme.

The protein localises to the mitochondrion inner membrane. Accessory subunit of the mitochondrial membrane respiratory chain NADH dehydrogenase (Complex I), that is believed not to be involved in catalysis. Complex I functions in the transfer of electrons from NADH to the respiratory chain. The immediate electron acceptor for the enzyme is believed to be ubiquinone. The protein is Probable NADH dehydrogenase [ubiquinone] iron-sulfur protein 6, mitochondrial (nduf-6) of Caenorhabditis elegans.